The sequence spans 1147 residues: Putative ATP-dependent RNA helicase L377 (1147 aa).

Residues 108–315 (INPNTPYRGL…VELINYLRPK (208 aa)) enclose the Helicase ATP-binding domain. 121-128 (WGTGVGKS) provides a ligand contact to ATP. The short motif at 264-267 (DEAH) is the DEAH box element.

The protein belongs to the DEAD box helicase family. DEAH subfamily.

It localises to the virion. The enzyme catalyses ATP + H2O = ADP + phosphate + H(+). In Acanthamoeba polyphaga (Amoeba), this protein is Putative ATP-dependent RNA helicase L377.